Reading from the N-terminus, the 926-residue chain is MEVLDATGLAERLRWEDNDYWLHLEAETPFDKYPAKQHARRVQAKLGIEDGLIYLPGQPARNNEDSDMPAPFRQRRYFYYMSGCDEPDCHLMYDIRRDVLTLFIPRIKPERVIWNGRGSTPAEALAKYDIDQVHHSQDLTYIIQNWAFKHQHTSIYILHPSSRIPGCDNLMPRIDSHSLQPAISLCRMIKDDHEIKRIRKANDISSQAHREVLANIHKYKNEAQVEGLFMDVCISQQAKQQAYDPIAASGPNAGTLHYDANNEDLAGRQLMCLDAGCEYELYASDITRTFPLSASWPSKEAENIYNLVQRMQETCIERLEPGVRYLDLHIMAHQIAIDGLLRLGILCNGTREEIYKAGTSRAFFPHGLGHHIGLEVHDVGQAELMSVRRGKPVYQQAPSLYPENFHDPVYDSETCHAPTDPQSSHLEEGMVVTVEPGIYFSVYALQHFYLPSPIHSKFINLEVLERYLPVGGVRIEDDLLITANGHENLTTAPKGEAMLDIIRQGNPGTTEILNPSPTPPRRMRSENRTPRLRAPGISKKTLQPLLTPLARAATLPTELRQQDDIDFEPIVGPSLFSGFSRAMTTEEKIQQWKQKRDSVPTAPSRPTKAKNLSPVCGENTANVQHVYMSTVSDLSSLSQSSVGSGSTSMCKNCGILVQTLDRLRQNLSSSTQTSPKPMTVPTFESRQKSHTVEEKHREMVCTDSLLDKVSIGQSNRAIGPEERRRKAQSDHHHHSRLKAATGEVKSRFSTRYTPAGVPPLMPSHDQYSITRRPNPERMQPVADTPIVPPRHLTYMTSTPQQSTENPALADLGLPRASAEIAAIRATKQAGQEKLDTQRTTLDAFQDEGQRLVIRSRHRLIPQTSMPVLMSQNPYHHHSNRSHGREGNNATNKRSMIDSQPAERRTRPERPERPARDYVPGDEFLTR.

Mn(2+) is bound by residues Asp-274, Asp-285, Glu-435, and Glu-476. 5 disordered regions span residues 505–538 (GNPG…PGIS), 595–615 (KRDS…LSPV), 668–696 (SSST…EEKH), 711–741 (IGQS…KAAT), and 865–926 (MPVL…FLTR). The segment covering 506–515 (NPGTTEILNP) has biased composition (polar residues). Basic and acidic residues-rich tracts occupy residues 685-696 (SRQKSHTVEEKH) and 719-730 (GPEERRRKAQSD). Residues 887-897 (NNATNKRSMID) show a composition bias toward polar residues. The span at 900 to 915 (PAERRTRPERPERPAR) shows a compositional bias: basic and acidic residues.

This sequence belongs to the peptidase M24B family. It depends on Mn(2+) as a cofactor.

The enzyme catalyses Release of any N-terminal amino acid, including proline, that is linked to proline, even from a dipeptide or tripeptide.. In terms of biological role, catalyzes the removal of a penultimate prolyl residue from the N-termini of peptides. This Pyrenophora teres f. teres (strain 0-1) (Barley net blotch fungus) protein is Probable Xaa-Pro aminopeptidase PTT_10145.